The following is a 431-amino-acid chain: UPF0597 protein BVU_2091 (431 aa).

It belongs to the UPF0597 family.

This Phocaeicola vulgatus (strain ATCC 8482 / DSM 1447 / JCM 5826 / CCUG 4940 / NBRC 14291 / NCTC 11154) (Bacteroides vulgatus) protein is UPF0597 protein BVU_2091.